The chain runs to 356 residues: Uroporphyrinogen decarboxylase (356 aa).

Residues 27 to 31 (RQAGR), aspartate 77, tyrosine 154, threonine 209, and histidine 327 contribute to the substrate site.

Belongs to the uroporphyrinogen decarboxylase family. In terms of assembly, homodimer.

The protein localises to the cytoplasm. It catalyses the reaction uroporphyrinogen III + 4 H(+) = coproporphyrinogen III + 4 CO2. Its pathway is porphyrin-containing compound metabolism; protoporphyrin-IX biosynthesis; coproporphyrinogen-III from 5-aminolevulinate: step 4/4. Catalyzes the decarboxylation of four acetate groups of uroporphyrinogen-III to yield coproporphyrinogen-III. The protein is Uroporphyrinogen decarboxylase of Hahella chejuensis (strain KCTC 2396).